The chain runs to 690 residues: Glycine--tRNA ligase beta subunit (690 aa).

The protein belongs to the class-II aminoacyl-tRNA synthetase family. Tetramer of two alpha and two beta subunits.

The protein resides in the cytoplasm. The enzyme catalyses tRNA(Gly) + glycine + ATP = glycyl-tRNA(Gly) + AMP + diphosphate. The chain is Glycine--tRNA ligase beta subunit from Buchnera aphidicola subsp. Acyrthosiphon pisum (strain 5A).